The sequence spans 610 residues: UvrABC system protein C (610 aa).

In terms of domain architecture, GIY-YIG spans 16–94 (SQPGVYRMYD…IKLYQPRYNV (79 aa)). In terms of domain architecture, UVR spans 204 to 239 (DQVLTQLIARMEKASQDLAFEEAARIRDQIQAVRRV).

This sequence belongs to the UvrC family. As to quaternary structure, interacts with UvrB in an incision complex.

It is found in the cytoplasm. The UvrABC repair system catalyzes the recognition and processing of DNA lesions. UvrC both incises the 5' and 3' sides of the lesion. The N-terminal half is responsible for the 3' incision and the C-terminal half is responsible for the 5' incision. This is UvrABC system protein C from Salmonella enteritidis PT4 (strain P125109).